The chain runs to 478 residues: GTPase Obg (478 aa).

Residues threonine 2–valine 159 form the Obg domain. The interval histidine 61–leucine 87 is disordered. One can recognise an OBG-type G domain in the interval alanine 160–alanine 330. Residues glycine 166–serine 173, phenylalanine 191–valine 195, aspartate 212–glycine 215, asparagine 282–aspartate 285, and serine 311–isoleucine 313 contribute to the GTP site. The Mg(2+) site is built by serine 173 and threonine 193. In terms of domain architecture, OCT spans proline 348–proline 430. The disordered stretch occupies residues alanine 436–phenylalanine 478. Residues leucine 439–alanine 468 show a composition bias toward basic and acidic residues. Positions glutamate 469 to phenylalanine 478 are enriched in acidic residues.

Belongs to the TRAFAC class OBG-HflX-like GTPase superfamily. OBG GTPase family. As to quaternary structure, monomer. Mg(2+) is required as a cofactor.

It localises to the cytoplasm. Functionally, an essential GTPase which binds GTP, GDP and possibly (p)ppGpp with moderate affinity, with high nucleotide exchange rates and a fairly low GTP hydrolysis rate. Plays a role in control of the cell cycle, stress response, ribosome biogenesis and in those bacteria that undergo differentiation, in morphogenesis control. The protein is GTPase Obg of Streptomyces griseus subsp. griseus (strain JCM 4626 / CBS 651.72 / NBRC 13350 / KCC S-0626 / ISP 5235).